A 519-amino-acid polypeptide reads, in one-letter code: Glucoamylase GLU1 (519 aa).

Positions 1 to 27 are cleaved as a signal peptide; sequence MKFGVLFSVFAAIVSALPLQEGPLNKR. N-linked (GlcNAc...) asparagine glycosylation is found at asparagine 115 and asparagine 127. Residue tryptophan 166 participates in substrate binding. N-linked (GlcNAc...) asparagine glycosylation is present at asparagine 205. The Proton acceptor role is filled by aspartate 234. The active-site Proton donor is glutamate 237.

The protein belongs to the glycosyl hydrolase 15 family.

It carries out the reaction Hydrolysis of terminal (1-&gt;4)-linked alpha-D-glucose residues successively from non-reducing ends of the chains with release of beta-D-glucose.. In Saccharomycopsis fibuligera (Yeast), this protein is Glucoamylase GLU1 (GLU1).